The sequence spans 93 residues: MIMDLQFFSHHKGGGSTANGRNSAGRRLGTKAADGSIVTAGSIIYRQRGTHINPGENVGRGGDDTLYAKVAGVVKFERMGRSKRKVSVYPVAE.

Positions 1–8 are excised as a propeptide; sequence MIMDLQFF. The tract at residues 8 to 29 is disordered; it reads FSHHKGGGSTANGRNSAGRRLG.

It belongs to the bacterial ribosomal protein bL27 family. In terms of processing, the N-terminus is cleaved by ribosomal processing cysteine protease Prp.

In Limosilactobacillus reuteri (strain DSM 20016) (Lactobacillus reuteri), this protein is Large ribosomal subunit protein bL27.